The primary structure comprises 150 residues: Triosephosphate isomerase (150 aa).

2 residues coordinate substrate: N9 and K11. The active-site Electrophile is H95.

The protein belongs to the triosephosphate isomerase family. As to quaternary structure, homodimer.

Its subcellular location is the cytoplasm. The catalysed reaction is D-glyceraldehyde 3-phosphate = dihydroxyacetone phosphate. Its pathway is carbohydrate biosynthesis; gluconeogenesis. The protein operates within carbohydrate degradation; glycolysis; D-glyceraldehyde 3-phosphate from glycerone phosphate: step 1/1. The sequence is that of Triosephosphate isomerase (tpiA) from Mycoplasmoides pirum (Mycoplasma pirum).